The sequence spans 424 residues: MAKMIPSLVSLILIGLVAIASAAVIFEERFDDGWENRWVKSEWKKDDNTAGEWKHTAGNWSGDANDKGIQTSEDYRFYAISAEFPEFSNKDKTLVFQFSVKHEQKLDCGGGYMKLLSGDVDQKKFGGDTPYSIMFGPDICGYSTKKVHAILTYNEANHLIKKDVPCETDQLTHVYTFILRPDATYSILIDNVEKQTGSLYSDWDLLPPKKIKDPSAKKPEDWDEQEYISDPEDKKPDGYDDIPKEIPDTDSKKPEDWDDEEDGEWTAPTIPNPEYMGEWKPKQIKNPNYKGKWEAPLIDNPDFKDDPELYVFPKLKYVGLELWQVKSGSLFDNVLICDDPDYAKKLADETWGKLKDAEKAAFDEAEKKNEEEESKDAPAESDAEDEPEDDEGGDDSDSESKAEETKSVDSEETSEKDATAHDEL.

The N-terminal stretch at 1–22 (MAKMIPSLVSLILIGLVAIASA) is a signal peptide. A glycan (N-linked (GlcNAc...) asparagine) is linked at Asn-59. Cysteines 108 and 140 form a disulfide. 4 residues coordinate an alpha-D-glucoside: Tyr-112, Lys-114, Tyr-131, and Asp-138. 7 tandem repeats follow at residues 194–205 (KQTGSLYSDWDL), 213–224 (DPSAKKPEDWDE), 230–241 (DPEDKKPDGYDD), 248–259 (DTDSKKPEDWDD), 263–273 (GEWTAPTIPNP), 277–287 (GEWKPKQIKNP), and 291–301 (GKWEAPLIDNP). The segment at 194 to 259 (KQTGSLYSDW…DSKKPEDWDD (66 aa)) is 4 X approximate repeats. Positions 210-220 (KIKDPSAKKPE) are enriched in basic and acidic residues. The disordered stretch occupies residues 210 to 279 (KIKDPSAKKP…IPNPEYMGEW (70 aa)). A compositionally biased stretch (acidic residues) spans 221 to 230 (DWDEQEYISD). Residues 231 to 255 (PEDKKPDGYDDIPKEIPDTDSKKPE) show a composition bias toward basic and acidic residues. The interval 263 to 301 (GEWTAPTIPNPEYMGEWKPKQIKNPNYKGKWEAPLIDNP) is 3 X approximate repeats. Glu-321 serves as a coordination point for an alpha-D-glucoside. Residues 362-378 (FDEAEKKNEEEESKDAP) are compositionally biased toward basic and acidic residues. A disordered region spans residues 362-424 (FDEAEKKNEE…EKDATAHDEL (63 aa)). Over residues 379–397 (AESDAEDEPEDDEGGDDSD) the composition is skewed to acidic residues. Phosphoserine is present on residues Ser-381 and Ser-396. The segment covering 398 to 424 (SESKAEETKSVDSEETSEKDATAHDEL) has biased composition (basic and acidic residues). The Prevents secretion from ER signature appears at 421-424 (HDEL).

Belongs to the calreticulin family.

The protein localises to the endoplasmic reticulum lumen. In terms of biological role, molecular calcium-binding chaperone promoting folding, oligomeric assembly and quality control in the ER via the calreticulin/calnexin cycle. This lectin may interact transiently with almost all of the monoglucosylated glycoproteins that are synthesized in the ER. The sequence is that of Calreticulin-2 (CRT2) from Arabidopsis thaliana (Mouse-ear cress).